Consider the following 321-residue polypeptide: MTTQTVSGRRYFTKAWLMEQKSLIALLVLIAIVSTLSPNFFTINNLFNILQQTSVNAIMAVGMTLVILTSGIDLSVGSLLALTGAVAASIVGIEVNALVAVAAALALGAAIGAVTGVIVAKGRVQAFIATLVMMLLLRGVTMVYTNGSPVNTGFTENADLFGWFGIGRPLGVPTPVWIMGIVFLAAWYMLHHTRLGRYIYALGGNEAATRLSGINVNKIKIIVYSLCGLLASLAGIIEVARLSSAQPTAGTGYELDAIAAVVLGGTSLAGGKGRIVGTLIGALILGFLNNGLNLLGVSSYYQMIVKAVVILLAVLVDNKKQ.

Residues 1 to 22 lie on the Cytoplasmic side of the membrane; that stretch reads MTTQTVSGRRYFTKAWLMEQKS. The helical transmembrane segment at 23–43 threads the bilayer; it reads LIALLVLIAIVSTLSPNFFTI. Residues 44 to 56 are Periplasmic-facing; sequence NNLFNILQQTSVN. Residues 57-77 traverse the membrane as a helical segment; it reads AIMAVGMTLVILTSGIDLSVG. Over 78–125 the chain is Cytoplasmic; sequence SLLALTGAVAASIVGIEVNALVAVAAALALGAAIGAVTGVIVAKGRVQ. A helical membrane pass occupies residues 126–145; that stretch reads AFIATLVMMLLLRGVTMVYT. The Periplasmic portion of the chain corresponds to 146–168; sequence NGSPVNTGFTENADLFGWFGIGR. Residues 169 to 190 traverse the membrane as a helical segment; the sequence is PLGVPTPVWIMGIVFLAAWYML. Residues 191 to 220 are Cytoplasmic-facing; that stretch reads HHTRLGRYIYALGGNEAATRLSGINVNKIK. Residues 221–240 form a helical membrane-spanning segment; sequence IIVYSLCGLLASLAGIIEVA. Residues 241–294 lie on the Periplasmic side of the membrane; sequence RLSSAQPTAGTGYELDAIAAVVLGGTSLAGGKGRIVGTLIGALILGFLNNGLNL. The chain crosses the membrane as a helical span at residues 295-316; that stretch reads LGVSSYYQMIVKAVVILLAVLV. The Cytoplasmic segment spans residues 317–321; the sequence is DNKKQ.

The protein belongs to the binding-protein-dependent transport system permease family. AraH/RbsC subfamily. The complex is composed of an ATP-binding protein (RbsA), two transmembrane proteins (RbsC) and a solute-binding protein (RbsB).

Its subcellular location is the cell inner membrane. Part of the ABC transporter complex RbsABC involved in ribose import. Probably responsible for the translocation of the substrate across the membrane. The sequence is that of Ribose import permease protein RbsC (rbsC) from Escherichia coli O157:H7.